The following is a 100-amino-acid chain: Large ribosomal subunit protein bL28 (100 aa).

It belongs to the bacterial ribosomal protein bL28 family.

The protein is Large ribosomal subunit protein bL28 of Ehrlichia ruminantium (strain Welgevonden).